Here is a 318-residue protein sequence, read N- to C-terminus: Acetyl-coenzyme A carboxylase carboxyl transferase subunit alpha (318 aa).

In terms of domain architecture, CoA carboxyltransferase C-terminal spans 34–295 (DIEDQISQLR…KQAIKKDLSE (262 aa)).

Belongs to the AccA family. In terms of assembly, acetyl-CoA carboxylase is a heterohexamer composed of biotin carboxyl carrier protein (AccB), biotin carboxylase (AccC) and two subunits each of ACCase subunit alpha (AccA) and ACCase subunit beta (AccD).

It localises to the cytoplasm. The enzyme catalyses N(6)-carboxybiotinyl-L-lysyl-[protein] + acetyl-CoA = N(6)-biotinyl-L-lysyl-[protein] + malonyl-CoA. It participates in lipid metabolism; malonyl-CoA biosynthesis; malonyl-CoA from acetyl-CoA: step 1/1. Functionally, component of the acetyl coenzyme A carboxylase (ACC) complex. First, biotin carboxylase catalyzes the carboxylation of biotin on its carrier protein (BCCP) and then the CO(2) group is transferred by the carboxyltransferase to acetyl-CoA to form malonyl-CoA. The polypeptide is Acetyl-coenzyme A carboxylase carboxyl transferase subunit alpha (Colwellia psychrerythraea (strain 34H / ATCC BAA-681) (Vibrio psychroerythus)).